The sequence spans 257 residues: Homeobox protein EMX1 (257 aa).

Residues 159–218 (PKRIRTAFSPSQLLRLERAFEKNHYVVGAERKQLAGSLSLSETQVKVWFQNRRTKYKRQK) constitute a DNA-binding region (homeobox). The interval 216 to 257 (RQKLEEEGPESEQKKKGSHHINRWRIATKQANGEDIDVTSND) is disordered. A compositionally biased stretch (basic and acidic residues) spans 217-230 (QKLEEEGPESEQKK).

This sequence belongs to the EMX homeobox family. As to quaternary structure, interacts with WRD11 (via the N-terminal and the central portion of the protein); the interaction associates EMX1 with GLI3. In terms of tissue distribution, cerebral cortex. Expressed in the olfactory bulbs.

The protein localises to the nucleus. Functionally, transcription factor, which in cooperation with EMX2, acts to generate the boundary between the roof and archipallium in the developing brain. May function in combinations with OTX1/2 to specify cell fates in the developing central nervous system. The chain is Homeobox protein EMX1 (Emx1) from Mus musculus (Mouse).